A 340-amino-acid chain; its full sequence is Phosphoribosylformylglycinamidine cyclo-ligase (340 aa).

This sequence belongs to the AIR synthase family.

The protein localises to the cytoplasm. It carries out the reaction 2-formamido-N(1)-(5-O-phospho-beta-D-ribosyl)acetamidine + ATP = 5-amino-1-(5-phospho-beta-D-ribosyl)imidazole + ADP + phosphate + H(+). It functions in the pathway purine metabolism; IMP biosynthesis via de novo pathway; 5-amino-1-(5-phospho-D-ribosyl)imidazole from N(2)-formyl-N(1)-(5-phospho-D-ribosyl)glycinamide: step 2/2. This Streptococcus agalactiae serotype V (strain ATCC BAA-611 / 2603 V/R) protein is Phosphoribosylformylglycinamidine cyclo-ligase.